A 252-amino-acid chain; its full sequence is Acetoacetate decarboxylase (252 aa).

Catalysis depends on lysine 116, which acts as the Schiff-base intermediate with acetoacetate.

It belongs to the ADC family.

The catalysed reaction is acetoacetate + H(+) = acetone + CO2. Its function is as follows. Catalyzes the conversion of acetoacetate to acetone and carbon dioxide. The sequence is that of Acetoacetate decarboxylase from Paraburkholderia xenovorans (strain LB400).